Consider the following 361-residue polypeptide: Phospho-N-acetylmuramoyl-pentapeptide-transferase (361 aa).

10 helical membrane passes run 21–41, 74–94, 97–117, 132–152, 168–188, 199–219, 239–259, 264–284, 288–308, and 339–359; these read YLTV…LWIG, MGGI…ANLA, YVWF…VDDY, WKYF…YAIG, VMPQ…VGTG, GLAI…AWAT, LVIF…FNTY, FMGD…AVLV, FLLV…ILQV, and VIIR…ITLK.

It belongs to the glycosyltransferase 4 family. MraY subfamily. Mg(2+) serves as cofactor.

It localises to the cell inner membrane. It carries out the reaction UDP-N-acetyl-alpha-D-muramoyl-L-alanyl-gamma-D-glutamyl-meso-2,6-diaminopimeloyl-D-alanyl-D-alanine + di-trans,octa-cis-undecaprenyl phosphate = di-trans,octa-cis-undecaprenyl diphospho-N-acetyl-alpha-D-muramoyl-L-alanyl-D-glutamyl-meso-2,6-diaminopimeloyl-D-alanyl-D-alanine + UMP. It functions in the pathway cell wall biogenesis; peptidoglycan biosynthesis. Its function is as follows. Catalyzes the initial step of the lipid cycle reactions in the biosynthesis of the cell wall peptidoglycan: transfers peptidoglycan precursor phospho-MurNAc-pentapeptide from UDP-MurNAc-pentapeptide onto the lipid carrier undecaprenyl phosphate, yielding undecaprenyl-pyrophosphoryl-MurNAc-pentapeptide, known as lipid I. The polypeptide is Phospho-N-acetylmuramoyl-pentapeptide-transferase (Histophilus somni (strain 129Pt) (Haemophilus somnus)).